The primary structure comprises 349 residues: UPF0324 inner membrane protein YeiH (349 aa).

At 1–12 (MTNITLQKQHRT) the chain is on the periplasmic side. A helical transmembrane segment spans residues 13–32 (LWHFIPGLALSAVITGVALW). At 33-35 (GGS) the chain is on the cytoplasmic side. A helical membrane pass occupies residues 36–58 (IPAVAGAGFSALTLAILLGMVLG). Residues 59-99 (NTIYPHIWKSCDGGVLFAKQYLLRLGIILYGFRLTFSQIAD) are Periplasmic-facing. A helical transmembrane segment spans residues 100–122 (VGISGIIIDVLTLSSTFLLACFL). The Cytoplasmic portion of the chain corresponds to 123–131 (GQKVFGLDK). A helical membrane pass occupies residues 132 to 151 (HTSWLIGAGSSICGAAAVLA). At 152 to 162 (TEPVVKAEASK) the chain is on the periplasmic side. A helical transmembrane segment spans residues 163 to 185 (VTVAVATVVIFGTVAIFLYPAIY). Over 186–261 (PLMSQWFSPE…SGTNSGEKSK (76 aa)) the chain is Cytoplasmic. A helical membrane pass occupies residues 262–283 (ITIPWFAILFIVVAIFNSFHLL). Over 284 to 289 (PQSVVN) the chain is Periplasmic. The chain crosses the membrane as a helical span at residues 290–312 (MLVTLDTFLLAMAMAALGLTTHV). Residues 313-321 (SALKKAGAK) are Cytoplasmic-facing. The helical transmembrane segment at 322-344 (PLLMALVLFAWLIVGGGAINYVI) threads the bilayer. Residues 345 to 349 (QSVIA) are Periplasmic-facing.

This sequence belongs to the UPF0324 family.

The protein resides in the cell inner membrane. This is UPF0324 inner membrane protein YeiH (yeiH) from Escherichia coli O6:H1 (strain CFT073 / ATCC 700928 / UPEC).